A 253-amino-acid chain; its full sequence is Malonyl-[acyl-carrier protein] O-methyltransferase (253 aa).

The protein belongs to the methyltransferase superfamily.

The catalysed reaction is malonyl-[ACP] + S-adenosyl-L-methionine = malonyl-[ACP] methyl ester + S-adenosyl-L-homocysteine. Its pathway is cofactor biosynthesis; biotin biosynthesis. Functionally, converts the free carboxyl group of a malonyl-thioester to its methyl ester by transfer of a methyl group from S-adenosyl-L-methionine (SAM). It allows to synthesize pimeloyl-ACP via the fatty acid synthetic pathway. This is Malonyl-[acyl-carrier protein] O-methyltransferase from Pectobacterium atrosepticum (strain SCRI 1043 / ATCC BAA-672) (Erwinia carotovora subsp. atroseptica).